Consider the following 274-residue polypeptide: Methylamine utilization protein MauF (274 aa).

7 helical membrane passes run 30–50 (WTRALILAASAAGGGAAALAM), 52–72 (AAHVALVLGLAAFAGGLLSTW), 105–125 (LGYALGALILGTLLGAIGGIA), 127–147 (LSGFATSFGLGLLAVIGLAYG), 176–196 (WVVGGLYGLSLGLDYLTYVQT), 202–222 (VTAAAVLSGNVAEAVALIAIF), and 253–273 (AAIADGAILTAVGAAFAMLAL).

The protein localises to the cell membrane. It participates in one-carbon metabolism; methylamine degradation. The polypeptide is Methylamine utilization protein MauF (mauF) (Paracoccus versutus (Thiobacillus versutus)).